A 336-amino-acid chain; its full sequence is Glycerol-3-phosphate dehydrogenase [NAD(P)+] (336 aa).

Residues tryptophan 11, arginine 33, and lysine 105 each coordinate NADPH. 3 residues coordinate sn-glycerol 3-phosphate: lysine 105, glycine 141, and serine 143. Residue alanine 145 coordinates NADPH. Sn-glycerol 3-phosphate is bound by residues lysine 196, aspartate 249, serine 259, arginine 260, and asparagine 261. Lysine 196 (proton acceptor) is an active-site residue. An NADPH-binding site is contributed by arginine 260. NADPH-binding residues include valine 284 and glutamate 286.

Belongs to the NAD-dependent glycerol-3-phosphate dehydrogenase family.

The protein resides in the cytoplasm. The catalysed reaction is sn-glycerol 3-phosphate + NAD(+) = dihydroxyacetone phosphate + NADH + H(+). It carries out the reaction sn-glycerol 3-phosphate + NADP(+) = dihydroxyacetone phosphate + NADPH + H(+). It functions in the pathway membrane lipid metabolism; glycerophospholipid metabolism. In terms of biological role, catalyzes the reduction of the glycolytic intermediate dihydroxyacetone phosphate (DHAP) to sn-glycerol 3-phosphate (G3P), the key precursor for phospholipid synthesis. This Delftia acidovorans (strain DSM 14801 / SPH-1) protein is Glycerol-3-phosphate dehydrogenase [NAD(P)+].